A 539-amino-acid chain; its full sequence is G protein-coupled receptor associated sorting protein 3 (539 aa).

The segment covering 1-10 (MTGSKNKARA) has biased composition (basic residues). Disordered regions lie at residues 1–111 (MTGS…DSWF) and 132–170 (NSVA…EEEE). Basic and acidic residues-rich tracts occupy residues 66–80 (VVAE…ESKA) and 88–106 (FNHK…DKPS). Residues 132–146 (NSVAKCENKPSTSIQ) are compositionally biased toward polar residues.

It belongs to the GPRASP family. Homodimer.

It is found in the cytoplasm. It localises to the nucleus. Survival and differentiation promoting protein that plays a role in the regulation of neurosynaptogenesis. Induces phosphatase PP2A activity which results in APP dephosphorylation and inhibits BACE1-mediated processing of APP. In Rattus norvegicus (Rat), this protein is G protein-coupled receptor associated sorting protein 3 (Gprasp3).